Reading from the N-terminus, the 315-residue chain is Phosphatidylglycerol--prolipoprotein diacylglyceryl transferase (315 aa).

Helical transmembrane passes span 19 to 39 and 93 to 113; these read FTIHMYAICILIGICVAVWIL and VWEGGMAIFGGISVGTLVAFL. R141 lines the a 1,2-diacyl-sn-glycero-3-phospho-(1'-sn-glycerol) pocket. 2 consecutive transmembrane segments (helical) span residues 188-208 and 256-276; these read LFHPTFLYEMIWNLIGAALII and MWTAIIVFVLGCILFVVLYQY.

This sequence belongs to the Lgt family.

The protein resides in the cell membrane. It carries out the reaction L-cysteinyl-[prolipoprotein] + a 1,2-diacyl-sn-glycero-3-phospho-(1'-sn-glycerol) = an S-1,2-diacyl-sn-glyceryl-L-cysteinyl-[prolipoprotein] + sn-glycerol 1-phosphate + H(+). It functions in the pathway protein modification; lipoprotein biosynthesis (diacylglyceryl transfer). Catalyzes the transfer of the diacylglyceryl group from phosphatidylglycerol to the sulfhydryl group of the N-terminal cysteine of a prolipoprotein, the first step in the formation of mature lipoproteins. In Bifidobacterium longum subsp. infantis (strain ATCC 15697 / DSM 20088 / JCM 1222 / NCTC 11817 / S12), this protein is Phosphatidylglycerol--prolipoprotein diacylglyceryl transferase.